Reading from the N-terminus, the 124-residue chain is Large ribosomal subunit protein bL12 (124 aa).

This sequence belongs to the bacterial ribosomal protein bL12 family. Homodimer. Part of the ribosomal stalk of the 50S ribosomal subunit. Forms a multimeric L10(L12)X complex, where L10 forms an elongated spine to which 2 to 4 L12 dimers bind in a sequential fashion. Binds GTP-bound translation factors.

Its function is as follows. Forms part of the ribosomal stalk which helps the ribosome interact with GTP-bound translation factors. Is thus essential for accurate translation. This chain is Large ribosomal subunit protein bL12, found in Rickettsia akari (strain Hartford).